Here is a 462-residue protein sequence, read N- to C-terminus: UDP-N-acetylmuramate--L-alanine ligase (462 aa).

114 to 120 is a binding site for ATP; the sequence is GSHGKTT.

The protein belongs to the MurCDEF family.

The protein localises to the cytoplasm. It catalyses the reaction UDP-N-acetyl-alpha-D-muramate + L-alanine + ATP = UDP-N-acetyl-alpha-D-muramoyl-L-alanine + ADP + phosphate + H(+). The protein operates within cell wall biogenesis; peptidoglycan biosynthesis. In terms of biological role, cell wall formation. The sequence is that of UDP-N-acetylmuramate--L-alanine ligase from Brachyspira hyodysenteriae (strain ATCC 49526 / WA1).